A 244-amino-acid chain; its full sequence is Small ribosomal subunit protein uS2 (244 aa).

It belongs to the universal ribosomal protein uS2 family.

The polypeptide is Small ribosomal subunit protein uS2 (Desulforudis audaxviator (strain MP104C)).